The primary structure comprises 119 residues: Autophagy-related protein 8 (119 aa).

The Phosphatidylethanolamine amidated glycine moiety is linked to residue G116. The propeptide at 117–119 (EAL) is removed in mature form.

It belongs to the ATG8 family. As to quaternary structure, conjugation to phosphatidylethanolamine (PE) leads to homodimerization. Interacts with ATG1, ATG3, ATG4, ATG7 and ATG12. In terms of processing, the C-terminal Glu-117, Ala-118 and Leu-119 residues of ATG8 are removed by ATG4 to expose Gly-116 at the C-terminus. This Gly-116 forms then a thioester bond with ATG7 (E1-like activating enzyme) before being transferred to ATG3 (the specific E2 conjugating enzyme), in order to be finally amidated with phosphatidylethanolamine. This lipid modification anchors ATG8 to membranes and can be reversed by ATG4, releasing soluble ATG8.

The protein resides in the cytoplasmic vesicle. Its subcellular location is the cvt vesicle membrane. It localises to the autophagosome membrane. It is found in the vacuole membrane. In terms of biological role, ubiquitin-like modifier involved in cytoplasm to vacuole transport (Cvt) vesicles and autophagosome formation. With ATG4, mediates the delivery of the vesicles and autophagosomes to the vacuole via the microtubule cytoskeleton. Required for selective autophagic degradation of the nucleus (nucleophagy) as well as for mitophagy which contributes to regulate mitochondrial quantity and quality by eliminating the mitochondria to a basal level to fulfill cellular energy requirements and preventing excess ROS production. Also participates in membrane fusion events that take place in the early secretory pathway. Also involved in endoplasmic reticulum-specific autophagic process and is essential for the survival of cells subjected to severe ER stress. The ATG8-PE conjugate mediates tethering between adjacent membranes and stimulates membrane hemifusion, leading to expansion of the autophagosomal membrane during autophagy. Moreover not only conjugation, but also subsequent ATG8-PE deconjugation is an important step required to facilitate multiple events during macroautophagy, and especially for efficient autophagosome biogenesis, the assembly of ATG9-containing tubulovesicular clusters into phagophores/autophagosomes, and for the disassembly of PAS-associated ATG components. Autophagy is required for conidiation, aerial mycelial growth, and pseudothecia formation, but not for host invasion. The polypeptide is Autophagy-related protein 8 (Cochliobolus heterostrophus (strain C4 / ATCC 48331 / race T) (Southern corn leaf blight fungus)).